A 198-amino-acid chain; its full sequence is Na(+)-translocating NADH-quinone reductase subunit E (198 aa).

The next 6 helical transmembrane spans lie at 11–31, 35–55, 77–97, 110–130, 140–160, and 176–196; these read SVFIENMALSFFLGMCTFLAV, VSTAFGLGIAVIVVLGIAVPV, FLNFITFIGVIAALVQILEMV, GIFLPLITVNCAIFGGVSFMV, VVYGIGAGTGWMLAIVALAGI, and LGITFITVGLMALGFMSFSGI.

This sequence belongs to the NqrDE/RnfAE family. As to quaternary structure, composed of six subunits; NqrA, NqrB, NqrC, NqrD, NqrE and NqrF.

The protein localises to the cell inner membrane. It catalyses the reaction a ubiquinone + n Na(+)(in) + NADH + H(+) = a ubiquinol + n Na(+)(out) + NAD(+). NQR complex catalyzes the reduction of ubiquinone-1 to ubiquinol by two successive reactions, coupled with the transport of Na(+) ions from the cytoplasm to the periplasm. NqrA to NqrE are probably involved in the second step, the conversion of ubisemiquinone to ubiquinol. The protein is Na(+)-translocating NADH-quinone reductase subunit E of Pasteurella multocida (strain Pm70).